The following is a 283-amino-acid chain: Non-selective voltage-gated ion channel VDAC3 (283 aa).

Cys-2 is modified (N-acetylcysteine). Thr-4 is modified (phosphothreonine). An N6-acetyllysine mark is found at Lys-12, Lys-15, and Lys-20. Beta stranded transmembrane passes span 26 to 35 (MVKIDLRTKS) and 39 to 47 (VEFSTSGHA). Residue Lys-53 forms a Glycyl lysine isopeptide (Lys-Gly) (interchain with G-Cter in ubiquitin) linkage. Transmembrane regions (beta stranded) follow at residues 54 to 64 (ASGNLETKYKV), 69 to 76 (LTFTQKWN), and 80 to 89 (TLGTEISLEN). An N6-acetyllysine modification is found at Lys-90. The chain crosses the membrane as a beta stranded span at residues 95-104 (LKLTLDTIFV). Glycyl lysine isopeptide (Lys-Gly) (interchain with G-Cter in ubiquitin) cross-links involve residues Lys-109 and Lys-110. Beta stranded transmembrane passes span 111-120 (SGKLKASYKR), 123-130 (FSLGSNVD), 137-145 (TIYGWAVLA), 150-158 (LAGYQMSFD), 163-175 (KLSQNNFALGYKA), 178-185 (FQLHTHVN), 189-198 (EFGGSIYQKV), 202-211 (IETSINLAWT), 218-227 (RFGIAAKYKL), and 231-238 (TSLSAKVN). Position 241 is a phosphoserine (Ser-241). NAD(+)-binding positions include 242–244 (LIG) and 260–264 (SALID). 2 beta stranded membrane passes run 242-251 (LIGLGYTQTL) and 254-263 (GVKLTLSALI). Lys-266 bears the N6-acetyllysine; alternate mark. Lys-266 is covalently cross-linked (Glycyl lysine isopeptide (Lys-Gly) (interchain with G-Cter in ubiquitin); alternate). Residues 273–282 (HKVGLGFELE) form a beta stranded membrane-spanning segment.

Belongs to the eukaryotic mitochondrial porin family. As to quaternary structure, interacts with ARMC12 in a TBC1D21-dependent manner. Interacts with MISFA. Post-translationally, ubiquitinated by PRKN during mitophagy, leading to its degradation and enhancement of mitophagy. Deubiquitinated by USP30.

It localises to the mitochondrion outer membrane. The protein localises to the membrane. The enzyme catalyses chloride(in) = chloride(out). The catalysed reaction is K(+)(in) = K(+)(out). Functionally, non-selective voltage-gated ion channel that mediates the transport of anions and cations through the mitochondrion outer membrane and plasma membrane. Forms a high-conducting channel with a stable open state and a voltage-induced closure with a mild preference for anions over cations. Involved in male fertility and sperm mitochondrial sheath formation. The protein is Non-selective voltage-gated ion channel VDAC3 of Oryctolagus cuniculus (Rabbit).